Consider the following 125-residue polypeptide: Small ribosomal subunit protein eS8 (125 aa).

The protein belongs to the eukaryotic ribosomal protein eS8 family. As to quaternary structure, part of the 30S ribosomal subunit.

This Methanosarcina mazei (strain ATCC BAA-159 / DSM 3647 / Goe1 / Go1 / JCM 11833 / OCM 88) (Methanosarcina frisia) protein is Small ribosomal subunit protein eS8.